The following is a 278-amino-acid chain: Maltodextrin transport system permease protein MdxG (278 aa).

6 helical membrane passes run 12–32 (ICTYLFLTLLSIVIIYPLLIT), 74–94 (TLVIALSVMVLQVTIVTLAGY), 108–128 (LIFFLIIQMVPTMAALTAFYV), 131–151 (MLIGALDQYWFLTAIYIGGGI), 183–203 (IFASIVLPLVKPMLAVQALWA), and 242–262 (VALFAAGAILAALPICVLFFF). The region spanning 71 to 263 (YSNTLVIALS…LPICVLFFFL (193 aa)) is the ABC transmembrane type-1 domain.

It belongs to the binding-protein-dependent transport system permease family. MalFG subfamily. As to quaternary structure, the complex is composed of two ATP-binding proteins (MsmX), two transmembrane proteins (MdxF and MdxG) and a solute-binding protein (MdxE).

It localises to the cell membrane. Functionally, part of the ABC transporter complex involved in maltodextrin import. Probably responsible for the translocation of the substrate across the membrane. This Bacillus subtilis (strain 168) protein is Maltodextrin transport system permease protein MdxG (mdxG).